Consider the following 333-residue polypeptide: Probable tRNA pseudouridine synthase B (333 aa).

The Nucleophile role is filled by D66. The PUA domain occupies 233-308; that stretch reads LKKIIIKDSA…EVVEITRVIM (76 aa).

The protein belongs to the pseudouridine synthase TruB family. Type 2 subfamily.

It carries out the reaction uridine(55) in tRNA = pseudouridine(55) in tRNA. In terms of biological role, could be responsible for synthesis of pseudouridine from uracil-55 in the psi GC loop of transfer RNAs. The polypeptide is Probable tRNA pseudouridine synthase B (Methanococcus maripaludis (strain DSM 14266 / JCM 13030 / NBRC 101832 / S2 / LL)).